The sequence spans 392 residues: MSDKVKGKKQEEKDQSLRVQILVYRCMGIDLWSPTMANDRPWLTFVTMGPLFLFMVPMFLAAHEYITQVSLLSDTLGSTFASMLTLVKFLLFCYHRKEFVGLIYHIRAILAKEIEVWPDAREIIEVENQSDQMLSLTYTRCFGLAGIFAALKPFVGIILSSIRGDEIHLELPHNGVYPYDLQVVMFYVPTYLWNVMASYSAVTMALCVDSLLFFFTYNVCAIFKIAKHRMIHLPAVGGKEELEGLVQVLLLHQKGLQIADHIADKYRPLIFLQFFLSALQICFIGFQVADLFPNPQSLYFIAFVGSLLIALFIYSKCGENIKSASLDFGNGLYETNWTDFSPPTKRALLIAAMRAQRPCQMKGYFFEASMATFSTIVRSAVSYIMMLRSFNA.

Residues 1–41 (MSDKVKGKKQEEKDQSLRVQILVYRCMGIDLWSPTMANDRP) lie on the Cytoplasmic side of the membrane. Residues 42-62 (WLTFVTMGPLFLFMVPMFLAA) form a helical membrane-spanning segment. Residues 63–74 (HEYITQVSLLSD) are Extracellular-facing. A helical membrane pass occupies residues 75–95 (TLGSTFASMLTLVKFLLFCYH). The Cytoplasmic segment spans residues 96-141 (RKEFVGLIYHIRAILAKEIEVWPDAREIIEVENQSDQMLSLTYTRC). Residues 142–162 (FGLAGIFAALKPFVGIILSSI) traverse the membrane as a helical segment. The Extracellular segment spans residues 163–202 (RGDEIHLELPHNGVYPYDLQVVMFYVPTYLWNVMASYSAV). A helical membrane pass occupies residues 203–223 (TMALCVDSLLFFFTYNVCAIF). Residues 224–268 (KIAKHRMIHLPAVGGKEELEGLVQVLLLHQKGLQIADHIADKYRP) lie on the Cytoplasmic side of the membrane. Residues 269 to 289 (LIFLQFFLSALQICFIGFQVA) traverse the membrane as a helical segment. The Extracellular segment spans residues 290-297 (DLFPNPQS). The chain crosses the membrane as a helical span at residues 298–318 (LYFIAFVGSLLIALFIYSKCG). Residues 319 to 362 (ENIKSASLDFGNGLYETNWTDFSPPTKRALLIAAMRAQRPCQMK) are Cytoplasmic-facing. A helical transmembrane segment spans residues 363-383 (GYFFEASMATFSTIVRSAVSY). At 384 to 392 (IMMLRSFNA) the chain is on the extracellular side.

This sequence belongs to the insect chemoreceptor superfamily. Heteromeric odorant receptor channel (TC 1.A.69) family. Or1a subfamily. As to quaternary structure, interacts with Orco. Complexes exist early in the endomembrane system in olfactory sensory neurons (OSNs), coupling these complexes to the conserved ciliary trafficking pathway. In terms of tissue distribution, expressed in olfactory sensory neurons in the antenna.

It is found in the cell membrane. Odorant receptor which mediates acceptance or avoidance behavior, depending on its substrates. The odorant receptor repertoire encodes a large collection of odor stimuli that vary widely in identity, intensity, and duration. May form a complex with Orco to form odorant-sensing units, providing sensitive and prolonged odorant signaling and calcium permeability. The chain is Odorant receptor 9a (Or9a) from Drosophila melanogaster (Fruit fly).